A 207-amino-acid polypeptide reads, in one-letter code: ATP-dependent Clp protease proteolytic subunit (207 aa).

Serine 111 acts as the Nucleophile in catalysis. The active site involves histidine 136.

It belongs to the peptidase S14 family. As to quaternary structure, fourteen ClpP subunits assemble into 2 heptameric rings which stack back to back to give a disk-like structure with a central cavity, resembling the structure of eukaryotic proteasomes. Component of the ClpAP and ClpXP complexes.

It localises to the cytoplasm. It catalyses the reaction Hydrolysis of proteins to small peptides in the presence of ATP and magnesium. alpha-casein is the usual test substrate. In the absence of ATP, only oligopeptides shorter than five residues are hydrolyzed (such as succinyl-Leu-Tyr-|-NHMec, and Leu-Tyr-Leu-|-Tyr-Trp, in which cleavage of the -Tyr-|-Leu- and -Tyr-|-Trp bonds also occurs).. In terms of biological role, cleaves peptides in various proteins in a process that requires ATP hydrolysis. Has a chymotrypsin-like activity. Plays a major role in the degradation of misfolded proteins. This chain is ATP-dependent Clp protease proteolytic subunit, found in Escherichia coli O139:H28 (strain E24377A / ETEC).